The following is a 74-amino-acid chain: Serine protease inhibitor Kazal-type 7 (74 aa).

The N-terminal stretch at 1 to 17 is a signal peptide; it reads MKLLGGLLLLFTATCLC. One can recognise a Kazal-like domain in the interval 18–74; that stretch reads NVDCDIYKKYPVVAIPCPIENIPVCGSDYITYGNKCKLCTEILRSNGKIQFLHEGHC. 3 disulfide bridges follow: cysteine 21–cysteine 56, cysteine 34–cysteine 53, and cysteine 42–cysteine 74.

Its subcellular location is the secreted. Its function is as follows. Probable serine protease inhibitor. In Rattus norvegicus (Rat), this protein is Serine protease inhibitor Kazal-type 7 (Spink7).